Reading from the N-terminus, the 191-residue chain is LOB domain-containing protein 19 (191 aa).

The LOB domain maps to 15-117; it reads GPCGACKFLR…AELAHVQARL (103 aa).

It belongs to the LOB domain-containing protein family. As to expression, expressed in shoots, roots and floral tissues, but not in stems or leaves.

The chain is LOB domain-containing protein 19 (LBD19) from Arabidopsis thaliana (Mouse-ear cress).